We begin with the raw amino-acid sequence, 283 residues long: Bifunctional protein FolD (283 aa).

Position 166–168 (166–168) interacts with NADP(+); the sequence is GAS.

Belongs to the tetrahydrofolate dehydrogenase/cyclohydrolase family. As to quaternary structure, homodimer.

It catalyses the reaction (6R)-5,10-methylene-5,6,7,8-tetrahydrofolate + NADP(+) = (6R)-5,10-methenyltetrahydrofolate + NADPH. The enzyme catalyses (6R)-5,10-methenyltetrahydrofolate + H2O = (6R)-10-formyltetrahydrofolate + H(+). The protein operates within one-carbon metabolism; tetrahydrofolate interconversion. Catalyzes the oxidation of 5,10-methylenetetrahydrofolate to 5,10-methenyltetrahydrofolate and then the hydrolysis of 5,10-methenyltetrahydrofolate to 10-formyltetrahydrofolate. This chain is Bifunctional protein FolD, found in Coxiella burnetii (strain Dugway 5J108-111).